We begin with the raw amino-acid sequence, 608 residues long: MRVLYIHAERFSWDPRDPALDIRDEPVSGSASNALVVFVSVERGDSPDEGFLKAVAADVVETAKKVGASSIVVYPYAHLSTDLARPYTAREVVGKLYEVVKAQFKGQVLKAPFGYYKAFELKCLGHPLSELSRVFKPEEAKTEKRAEERRDYYVVLTPDGAEYDPAKFNYAGLDDFKALVEKEVFKRELGGGEPKYLDYLRKFGFEWEPMSDVGHMRYAPEATVMMELVEDYAYMVAKSLGIPVFKIRGTNMFKLSEYAIESHARLFGERLYVVESDTDLILRYAACFQQFAMVKDWVISYRHLPFGLLEIADSYRHEQPGETVLLFRLRRFYMPDLHIFTKDLKEAMEVTFKLHEVIFREIGKLGRTYVSLYNVTEDFYKGHREYLVELARREGKPILVRILPGQKYYWVLNVEFHIVDELGRPREIATFQIDVGNAQRFGIKYVDENNQVRYPVIIHTAILGSVERYLYAVFDTMAKMEKEGKTPRLPTWLSPVQTRVIPVSKENLKYAMAVADLLEAEGIRVDVDDREETLSKKIRDAETAWVPYIIVVGSKEEAEGTVTVRERGGGQYKAKAEELAKKIREEVKGYPQRPLYLPRLLSQRPSRH.

The tract at residues Met-1–Glu-143 is editing domain. 2 catalytic regions span residues Pro-194–Pro-490 and Lys-195–Pro-490. Zn(2+)-binding residues include Cys-287, His-338, and His-459.

This sequence belongs to the class-II aminoacyl-tRNA synthetase family. In terms of assembly, homodimer. Zn(2+) serves as cofactor.

The protein localises to the cytoplasm. The enzyme catalyses tRNA(Thr) + L-threonine + ATP = L-threonyl-tRNA(Thr) + AMP + diphosphate + H(+). Its function is as follows. Catalyzes the attachment of threonine to tRNA(Thr) in a two-step reaction: L-threonine is first activated by ATP to form Thr-AMP and then transferred to the acceptor end of tRNA(Thr). Also edits incorrectly charged L-seryl-tRNA(Thr). This is Threonine--tRNA ligase from Pyrobaculum arsenaticum (strain DSM 13514 / JCM 11321 / PZ6).